The primary structure comprises 396 residues: GTPase Obg (396 aa).

Residues 1–159 (MKFVDEATIY…RNIRLELKVL (159 aa)) enclose the Obg domain. An OBG-type G domain is found at 160 to 333 (ADVGLLGLPN…LCQDIMTWIE (174 aa)). Residues 166 to 173 (GLPNAGKS), 191 to 195 (FTTLV), 213 to 216 (DIPG), 283 to 286 (NKTD), and 314 to 316 (SAL) contribute to the GTP site. Mg(2+) contacts are provided by Ser173 and Thr193. 2 disordered regions span residues 337-356 (EEER…REQM) and 373-396 (LARK…FYAP). Positions 347–356 (EADRLNREQM) are enriched in basic and acidic residues. The span at 381-396 (SDDDDDDEDVEVFYAP) shows a compositional bias: acidic residues.

Belongs to the TRAFAC class OBG-HflX-like GTPase superfamily. OBG GTPase family. As to quaternary structure, monomer. Requires Mg(2+) as cofactor.

Its subcellular location is the cytoplasm. Functionally, an essential GTPase which binds GTP, GDP and possibly (p)ppGpp with moderate affinity, with high nucleotide exchange rates and a fairly low GTP hydrolysis rate. Plays a role in control of the cell cycle, stress response, ribosome biogenesis and in those bacteria that undergo differentiation, in morphogenesis control. In Hahella chejuensis (strain KCTC 2396), this protein is GTPase Obg.